Reading from the N-terminus, the 446-residue chain is Glutamine synthetase (446 aa).

The GS beta-grasp domain occupies 18–103; the sequence is ENVRYLRLQF…LICDVYKTDG (86 aa). The 337-residue stretch at 110-446 folds into the GS catalytic domain; the sequence is PRANLKRVLK…WERDQYMKQY (337 aa). Mg(2+) is bound by residues glutamate 134 and glutamate 136. Glutamate 186 is a binding site for ATP. Residues glutamate 191 and glutamate 198 each contribute to the Mg(2+) site. Residues 242-243 and glycine 243 each bind L-glutamate; that span reads NG. Histidine 247 is a Mg(2+) binding site. Serine 251 contributes to the ATP binding site. Residues arginine 300, glutamate 306, and arginine 318 each coordinate L-glutamate. Positions 318 and 323 each coordinate ATP. Glutamate 335 contributes to the Mg(2+) binding site. Arginine 337 contributes to the L-glutamate binding site.

It belongs to the glutamine synthetase family. As to quaternary structure, oligomer of 12 subunits arranged in the form of two hexagons. In its feedback-inhibited form, interacts with TnrA in order to block its DNA-binding activity. It depends on Mg(2+) as a cofactor.

Its subcellular location is the cytoplasm. The catalysed reaction is L-glutamate + NH4(+) + ATP = L-glutamine + ADP + phosphate + H(+). Inhibited by glutamine. Glutamine synthetase (GS) is an unusual multitasking protein that functions as an enzyme, a transcription coregulator, and a chaperone in ammonium assimilation and in the regulation of genes involved in nitrogen metabolism. It catalyzes the ATP-dependent biosynthesis of glutamine from glutamate and ammonia. Feedback-inhibited GlnA also interacts with and regulates the activity of the transcriptional regulator TnrA. During nitrogen limitation, TnrA is in its DNA-binding active state and turns on the transcription of genes required for nitrogen assimilation. Under conditions of nitrogen excess, feedback-inhibited GlnA forms a stable complex with TnrA, which inhibits its DNA-binding activity. In contrast, feedback-inhibited GlnA acts as a chaperone to stabilize the DNA-binding activity of GlnR, which represses the transcription of nitrogen assimilation genes. This chain is Glutamine synthetase, found in Staphylococcus aureus (strain MSSA476).